The chain runs to 419 residues: L-rhamnose isomerase (419 aa).

3 residues coordinate Mn(2+): His-262, Asp-294, and Asp-296.

Belongs to the rhamnose isomerase family. As to quaternary structure, homotetramer. Mn(2+) is required as a cofactor.

It localises to the cytoplasm. It carries out the reaction L-rhamnopyranose = L-rhamnulose. It functions in the pathway carbohydrate degradation; L-rhamnose degradation; glycerone phosphate from L-rhamnose: step 1/3. Catalyzes the interconversion of L-rhamnose and L-rhamnulose. The protein is L-rhamnose isomerase of Escherichia coli O9:H4 (strain HS).